Reading from the N-terminus, the 949-residue chain is Coiled-coil domain-containing protein 66 (949 aa).

Residues Thr115 and Thr121 each carry the phosphothreonine modification. Phosphoserine is present on Ser369. A coiled-coil region spans residues 474–558 (QVEEKCRKKQ…EQRIRELAQK (85 aa)). The tract at residues 570–949 (GVDTIQIEYN…NQEENFGSSF (380 aa)) is mediates localization to cilia, centrosomes and spindle microtubules and the interaction with PCM1, CEP290, CEP104 and CSPP1. Ser606 bears the Phosphoserine mark. Disordered regions lie at residues 691–714 (QTKH…KRYI) and 789–809 (SFSK…RTQQ).

Homodimer; disulfide-linked. Interacts with CEP290. Interacts with PCM1. Interacts with ARMC9, TOGARAM1, CSPP1 and CEP104. Interacts with CDK5RAP2, CEP152, CEP192, TBG1 and PRC1.

The protein localises to the cytoplasm. It is found in the cytoskeleton. It localises to the microtubule organizing center. The protein resides in the centrosome. Its subcellular location is the centriolar satellite. The protein localises to the cell projection. It is found in the cilium. It localises to the cilium basal body. The protein resides in the cilium axoneme. Its subcellular location is the photoreceptor inner segment. The protein localises to the photoreceptor outer segment. In terms of biological role, microtubule-binding protein required for ciliogenesis. May function in ciliogenesis by mediating the transport of proteins like BBS4 to the cilium, but also through the organization of the centriolar satellites. Required for the assembly of signaling-competent cilia with proper structure and length. Mediates this function in part by regulating transition zone assembly and basal body recruitment of the IFT-B complex. Cooperates with the ciliopathy proteins CSPP1 and CEP104 during cilium length regulation. Plays two important roles during cell division. First, is required for mitotic progression via regulation of spindle assembly, organization and orientation, levels of spindle microtubules (MTs), kinetochore-fiber integrity, and chromosome alignment. Second, functions during cytokinesis in part by regulating assembly and organization of central spindle and midbody MTs Plays a role in retina morphogenesis and/or homeostasis. This is Coiled-coil domain-containing protein 66 from Pongo abelii (Sumatran orangutan).